A 2896-amino-acid chain; its full sequence is Protein PRRC2C (2896 aa).

An N6-acetyllysine modification is found at Lys-27. The segment at 28–212 (GKSLETQKTT…STAGTSEQND (185 aa)) is disordered. Residues 88–97 (QEQHEEEKTP) show a composition bias toward basic and acidic residues. Over residues 105-119 (KPGVAAPPEVAPAPK) the composition is skewed to low complexity. Positions 134-144 (QVNSQFQQEFP) are enriched in polar residues. Residues 151-160 (DQEKKEKETN) show a composition bias toward basic and acidic residues. 2 positions are modified to phosphoserine: Ser-187 and Ser-191. The segment covering 201–211 (DESTAGTSEQN) has biased composition (polar residues). Residue Arg-242 is modified to Asymmetric dimethylarginine; alternate. Arg-242 is modified (omega-N-methylarginine; alternate). Arg-255 and Arg-266 each carry asymmetric dimethylarginine. Disordered stretches follow at residues 264–729 (PMRF…QHLA) and 750–788 (SGRP…SFEH). Residues Arg-279 and Arg-281 each carry the omega-N-methylarginine modification. Basic and acidic residues predominate over residues 301–310 (ELKELDKFDN). The residue at position 335 (Ser-335) is a Phosphoserine. Over residues 341–358 (GSNSPKENNSEDQGSKAS) the composition is skewed to polar residues. Positions 359–368 (ENNENKKETD) are enriched in basic and acidic residues. The segment covering 370–381 (VSNTKSSSQIPA) has biased composition (polar residues). An N6-acetyllysine modification is found at Lys-392. A phosphoserine mark is found at Ser-395 and Ser-500. Residues 395–405 (SFNQERGTSSH) show a composition bias toward polar residues. The span at 465–648 (RREEEERRME…EATPVVHETE (184 aa)) shows a compositional bias: basic and acidic residues. Over residues 676–708 (QRQQEQMKQQQWQQQQQQGVLPQTVPSQPSSST) the composition is skewed to low complexity. A compositionally biased stretch (pro residues) spans 759–769 (PIHPGMIPPKP). Ser-779, Ser-785, and Ser-801 each carry phosphoserine. Residues 804 to 1118 (RMLWGSDPYP…PVSTVQVEPA (315 aa)) form a disordered region. Basic and acidic residues-rich tracts occupy residues 825–836 (ATEEPEDVRSEA), 852–867 (NQLE…RESS), and 878–888 (SVEDVRPHHTD). 4 positions are modified to phosphoserine: Ser-867, Ser-878, Ser-920, and Ser-929. Basic and acidic residues-rich tracts occupy residues 954 to 993 (IDSK…ETRW), 1000 to 1010 (NRREEVNDRPV), and 1020 to 1058 (VLRD…KKDL). A coiled-coil region spans residues 1020–1046 (VLRDMKEEREQRKEKEGEKAEKVTEKV). The segment covering 1059 to 1081 (PPPPPPPQPPAPIQPQSVPPPIQ) has biased composition (pro residues). The segment covering 1089 to 1100 (STETATLAQKPS) has biased composition (polar residues). Residue Lys-1133 forms a Glycyl lysine isopeptide (Lys-Gly) (interchain with G-Cter in SUMO2) linkage. 4 stretches are compositionally biased toward basic and acidic residues: residues 1143-1163 (SKDL…KKES), 1170-1180 (YWKEARERDWF), 1214-1230 (HTRD…RAEH), and 1237-1248 (RQREESETRSES). Disordered regions lie at residues 1143 to 1647 (SKDL…DALS), 1670 to 1785 (EDPQ…SAPV), 1905 to 1991 (APAS…TAEL), 2005 to 2164 (ISKK…VSEM), 2218 to 2238 (LPNT…SLTS), 2257 to 2290 (WENS…GPST), 2317 to 2341 (GAGT…NICK), and 2668 to 2701 (DIKP…QSSK). 5 positions are modified to phosphoserine: Ser-1242, Ser-1246, Ser-1248, Ser-1249, and Ser-1263. Basic and acidic residues-rich tracts occupy residues 1261–1297 (RGSE…ENKK), 1305–1330 (FKPD…DKAK), 1381–1418 (EVPK…PARE), and 1429–1446 (PRQD…REAA). A phosphothreonine mark is found at Thr-1265 and Thr-1267. Composition is skewed to polar residues over residues 1457 to 1469 (TNGT…QEPV) and 1477 to 1491 (GNKT…SSDQ). Over residues 1505-1517 (FNERRERDEKKNA) the composition is skewed to basic and acidic residues. Phosphoserine is present on Ser-1544. 2 stretches are compositionally biased toward basic and acidic residues: residues 1620-1634 (NSKD…DPKP) and 1692-1704 (RLQD…KEEQ). The stretch at 1682–1717 (TEVVSKKQQKRLQDEERRKKEEQVIQVWNKKNANEK) forms a coiled coil. Over residues 1742–1785 (SSASVPPLASAPLPPSTSASVPASTSAPLPATLTPVPASTSAPV) the composition is skewed to low complexity. Residues 1913-1929 (APAPTPVSAPNPAPPAP) show a composition bias toward pro residues. Residues 1943 to 1952 (PLQTTSQSSK) show a composition bias toward low complexity. Position 1965 is a phosphothreonine (Thr-1965). A compositionally biased stretch (polar residues) spans 1976-1986 (KSIQTPQSHGT). Ser-1983 and Ser-2013 each carry phosphoserine. The span at 2019–2035 (SVSAWNKPLTSFGSAPS) shows a compositional bias: polar residues. Residues 2075 to 2088 (KSADKIPEPKEQRQ) are compositionally biased toward basic and acidic residues. Residue Ser-2105 is modified to Phosphoserine. Basic and acidic residues predominate over residues 2108-2132 (ENKEHKPGPIGKERSLKNRKVKDAQ). Ser-2143 carries the post-translational modification Phosphoserine. A compositionally biased stretch (basic and acidic residues) spans 2257 to 2267 (WENSPNVREKG). At Ser-2260 the chain carries Phosphoserine. The segment covering 2269 to 2290 (PVTSTAPPIATGVSSSASGPST) has biased composition (polar residues). Residues 2320–2334 (TYTTSSLSTKSTTTS) are compositionally biased toward low complexity. Phosphothreonine is present on residues Thr-2673 and Thr-2682. Residues 2679–2701 (RSTTPTSSPFRATSTSPNSQSSK) are compositionally biased toward polar residues. Ser-2686 and Ser-2694 each carry phosphoserine. Arg-2814 carries the omega-N-methylarginine modification. Arg-2823 bears the Asymmetric dimethylarginine; alternate mark. Arg-2823 bears the Omega-N-methylarginine; alternate mark. The span at 2824 to 2833 (FFSEQQQSKQ) shows a compositional bias: polar residues. Residues 2824–2896 (FFSEQQQSKQ…QAIKTEETKS (73 aa)) form a disordered region.

In terms of tissue distribution, overexpressed in bladder cancer.

It is found in the cytoplasm. Its subcellular location is the stress granule. Its function is as follows. Required for efficient formation of stress granules. This chain is Protein PRRC2C, found in Homo sapiens (Human).